The following is a 95-amino-acid chain: Co-chaperonin GroES (95 aa).

Belongs to the GroES chaperonin family. Heptamer of 7 subunits arranged in a ring. Interacts with the chaperonin GroEL.

The protein resides in the cytoplasm. Functionally, together with the chaperonin GroEL, plays an essential role in assisting protein folding. The GroEL-GroES system forms a nano-cage that allows encapsulation of the non-native substrate proteins and provides a physical environment optimized to promote and accelerate protein folding. GroES binds to the apical surface of the GroEL ring, thereby capping the opening of the GroEL channel. This is Co-chaperonin GroES from Francisella tularensis subsp. holarctica (strain FTNF002-00 / FTA).